The chain runs to 421 residues: Shaggy-related protein kinase kappa (421 aa).

Gly residues predominate over residues 1 to 10; the sequence is MASSGLGNGV. A disordered region spans residues 1 to 60; that stretch reads MASSGLGNGVGTSRSAKGLKSSSSSVDWLTRDLAETRIRDKVETDDERDSEPDIIDGAGA. Over residues 29–42 the composition is skewed to basic and acidic residues; sequence LTRDLAETRIRDKV. The segment covering 43-54 has biased composition (acidic residues); sequence ETDDERDSEPDI. The Protein kinase domain occupies 83-367; sequence YISEHVVGTG…ALEACIHPLF (285 aa). Residues 89–97 and lysine 112 contribute to the ATP site; that span reads VGTGSFGMV. The active-site Proton acceptor is the aspartate 208. Tyrosine 243 bears the Phosphotyrosine mark.

Belongs to the protein kinase superfamily. CMGC Ser/Thr protein kinase family. GSK-3 subfamily. Autophosphorylated mainly on threonine and serine residues. As to expression, expressed exclusively in inflorescences.

The catalysed reaction is L-seryl-[protein] + ATP = O-phospho-L-seryl-[protein] + ADP + H(+). The enzyme catalyses L-threonyl-[protein] + ATP = O-phospho-L-threonyl-[protein] + ADP + H(+). In terms of biological role, may mediate extracellular signals to regulate transcription in differentiating cells. The chain is Shaggy-related protein kinase kappa (ASK10) from Arabidopsis thaliana (Mouse-ear cress).